A 398-amino-acid chain; its full sequence is Histone-lysine N-methyltransferase ASHR2 (398 aa).

The 260-residue stretch at 11–270 (TLLRVAEIGG…EGREVCLSYF (260 aa)) folds into the SET domain.

The protein belongs to the class V-like SAM-binding methyltransferase superfamily. Histone-lysine methyltransferase family. SET2 subfamily.

The protein resides in the nucleus. It localises to the chromosome. The enzyme catalyses L-lysyl-[histone] + S-adenosyl-L-methionine = N(6)-methyl-L-lysyl-[histone] + S-adenosyl-L-homocysteine + H(+). Functionally, histone methyltransferase. In Arabidopsis thaliana (Mouse-ear cress), this protein is Histone-lysine N-methyltransferase ASHR2 (ASHR2).